The following is a 349-amino-acid chain: Hydroxymethylglutaryl-CoA synthase (349 aa).

(3S)-3-hydroxy-3-methylglutaryl-CoA contacts are provided by Asp29 and Ala30. Glu81 serves as the catalytic Proton donor/acceptor. 2 residues coordinate (3S)-3-hydroxy-3-methylglutaryl-CoA: Cys113 and Thr154. Cys113 functions as the Acyl-thioester intermediate in the catalytic mechanism. Arg202 lines the CoA pocket. Residues Thr204 and His237 each coordinate (3S)-3-hydroxy-3-methylglutaryl-CoA. His237 functions as the Proton donor/acceptor in the catalytic mechanism. Residue Lys242 coordinates CoA. (3S)-3-hydroxy-3-methylglutaryl-CoA contacts are provided by Lys246, Asn269, and Ser299.

The protein belongs to the thiolase-like superfamily. Archaeal HMG-CoA synthase family. Interacts with acetoacetyl-CoA thiolase that catalyzes the precedent step in the pathway and with a DUF35 protein. The acetoacetyl-CoA thiolase/HMG-CoA synthase complex channels the intermediate via a fused CoA-binding site, which allows for efficient coupling of the endergonic thiolase reaction with the exergonic HMGCS reaction.

The catalysed reaction is acetoacetyl-CoA + acetyl-CoA + H2O = (3S)-3-hydroxy-3-methylglutaryl-CoA + CoA + H(+). It participates in metabolic intermediate biosynthesis; (R)-mevalonate biosynthesis; (R)-mevalonate from acetyl-CoA: step 2/3. In terms of biological role, catalyzes the condensation of acetyl-CoA with acetoacetyl-CoA to form 3-hydroxy-3-methylglutaryl-CoA (HMG-CoA). Functions in the mevalonate (MVA) pathway leading to isopentenyl diphosphate (IPP), a key precursor for the biosynthesis of isoprenoid compounds that are building blocks of archaeal membrane lipids. The sequence is that of Hydroxymethylglutaryl-CoA synthase from Methanosarcina mazei (strain ATCC BAA-159 / DSM 3647 / Goe1 / Go1 / JCM 11833 / OCM 88) (Methanosarcina frisia).